Here is a 240-residue protein sequence, read N- to C-terminus: Tetrahydromethanopterin S-methyltransferase subunit A (240 aa).

Residues 1-218 (MADKREPAPG…KFHSGVHAGK (218 aa)) are Cytoplasmic-facing. Residue histidine 85 coordinates 5-hydroxybenzimidazolylcob(I)amide. Residues 219–239 (VEGAMIGLTITISLLGLLLLG) traverse the membrane as a helical segment. Position 240 (arginine 240) is a topological domain, extracellular.

The protein belongs to the MtrA family. In terms of assembly, the complex is composed of 8 subunits; MtrA, MtrB, MtrC, MtrD, MtrE, MtrF, MtrG and MtrH. It depends on 5-hydroxybenzimidazolylcob(I)amide as a cofactor.

It is found in the cell membrane. The catalysed reaction is 5-methyl-5,6,7,8-tetrahydromethanopterin + coenzyme M + 2 Na(+)(in) = 5,6,7,8-tetrahydromethanopterin + methyl-coenzyme M + 2 Na(+)(out). The protein operates within one-carbon metabolism; methanogenesis from CO(2); methyl-coenzyme M from 5,10-methylene-5,6,7,8-tetrahydromethanopterin: step 2/2. In terms of biological role, part of a complex that catalyzes the formation of methyl-coenzyme M and tetrahydromethanopterin from coenzyme M and methyl-tetrahydromethanopterin. This is an energy-conserving, sodium-ion translocating step. This chain is Tetrahydromethanopterin S-methyltransferase subunit A, found in Methanosarcina mazei (strain ATCC BAA-159 / DSM 3647 / Goe1 / Go1 / JCM 11833 / OCM 88) (Methanosarcina frisia).